Consider the following 1039-residue polypeptide: Serine/threonine-protein kinase Tao (1039 aa).

The region spanning 27–280 (FEDLREIGHG…SAKLLTHAYV (254 aa)) is the Protein kinase domain. ATP-binding positions include 33 to 41 (IGHGSFGAV) and lysine 56. Aspartate 150 (proton acceptor) is an active-site residue. Disordered stretches follow at residues 324 to 457 (SAVG…NSAS), 485 to 508 (GGGGTGTGGSGGGSPASGGPLADR), 629 to 648 (HQQDVERRAKQTSAAEKKLH), and 677 to 707 (WKRELSMDESTPKRQRDLTLQSQKDNLKQHE). A compositionally biased stretch (polar residues) spans 341–350 (SSKSNSITSE). Over residues 359–376 (SAASSQSSSSNSIPAAAQ) the composition is skewed to low complexity. The span at 377-387 (NHHHIAAHHHQ) shows a compositional bias: basic residues. 2 stretches are compositionally biased toward low complexity: residues 388–397 (QAASAAVAAA) and 413–429 (PSGQQGQPVPPGAVSRN). The segment covering 444–454 (HSMNNNVTPTN) has biased composition (polar residues). Residues 485–500 (GGGGTGTGGSGGGSPA) show a composition bias toward gly residues. Coiled-coil stretches lie at residues 631-765 (QDVE…MLLK) and 835-993 (KQFR…DNES). Over residues 677–693 (WKRELSMDESTPKRQRD) the composition is skewed to basic and acidic residues.

This sequence belongs to the protein kinase superfamily. STE Ser/Thr protein kinase family. STE20 subfamily. Interacts with Schip1; the interaction enhances Tao kinase activity. Mg(2+) serves as cofactor. Post-translationally, autophosphorylated. In terms of tissue distribution, in the posterior midgut, expressed in almost all intestinal cell types including intestinal stem cells and enterocytes (at protein level). Maternally expressed, ubiquitously distributed in the egg and early embryo and enriched in the germ plasm at the posterior pole of the early embryo including the pole cells.

Its subcellular location is the cytoplasm. It is found in the cytoskeleton. It localises to the spindle. The protein resides in the membrane. The protein localises to the perikaryon. Its subcellular location is the cell cortex. It is found in the cell projection. It localises to the axon. The enzyme catalyses L-seryl-[protein] + ATP = O-phospho-L-seryl-[protein] + ADP + H(+). The catalysed reaction is L-threonyl-[protein] + ATP = O-phospho-L-threonyl-[protein] + ADP + H(+). Serine/threonine-protein kinase which regulates the Hippo/SWH (Sav/Wts/Hpo) signaling pathway, a signaling pathway that plays a pivotal role in organ size control and tumor suppression by restricting proliferation and promoting apoptosis. The core of this pathway is composed of a kinase cascade wherein Hippo (hpo), in complex with its regulatory protein Salvador (sav), phosphorylates and activates Warts (wts) in complex with its regulatory protein Mats, which in turn phosphorylates and inactivates the Yorkie (yki) oncoprotein. In imaginal cells, phosphorylates and activates hpo and leads to repression of yki. In the midgut, negatively regulates the proliferation of intestinal stem cells through the Hippo/SWH pathway. Independent of the hippo/SWH pathway, regulates epithelial morphogenesis in follicle cells by promoting the endocytosis of Fas2 and reducing lateral adhesion between epithelial cells which, in turn, permits shrinking of the lateral membrane and initiates morphogenesis of the squamous epithelium. Required for the development of both the mushroom body and the ellipsoid body in the brain and may act as a negative regulator of the par-1 kinase. Negatively regulates the JNK pathway which increases sensitivity to ethanol exposure. Plays a role in the control of cell shape by negatively regulating the growth of microtubule plus-ends as they contact the actin-rich cell cortex. Required for the induction of apoptosis in pole cells by promoting expression of skl which enhances activity of the apoptosis activator hid. In terms of biological role, induces in vitro expression of large, highly dynamic, microtubule-dependent lamellopodia-like cytoplasmic expansions which constantly probe the environment. Its function is as follows. Induces in vitro expression of actin-dependent filopodia-like cytoplasmic protrusions which firmly attach to the substrate. Antagonizes the activity of isoform D. This is Serine/threonine-protein kinase Tao from Drosophila melanogaster (Fruit fly).